The chain runs to 209 residues: Somatotropin (209 aa).

Residues 1 to 22 (MGQVFLLMPVLLVAGYLSLGAA) form the signal peptide. Residue H38 coordinates Zn(2+). C71 and C182 are joined by a disulfide. E191 serves as a coordination point for Zn(2+). A disulfide bond links C199 and C207.

It belongs to the somatotropin/prolactin family.

It localises to the secreted. Growth hormone plays an important role in growth control and is involved in the regulation of several anabolic processes. Implicated as an osmoregulatory substance important for seawater adaptation. This is Somatotropin (gh) from Esox lucius (Northern pike).